The sequence spans 252 residues: 5'-nucleotidase SurE (252 aa).

The a divalent metal cation site is built by D8, D9, S39, and N91.

This sequence belongs to the SurE nucleotidase family. A divalent metal cation serves as cofactor.

The protein localises to the cytoplasm. It catalyses the reaction a ribonucleoside 5'-phosphate + H2O = a ribonucleoside + phosphate. Functionally, nucleotidase that shows phosphatase activity on nucleoside 5'-monophosphates. The chain is 5'-nucleotidase SurE from Bordetella petrii (strain ATCC BAA-461 / DSM 12804 / CCUG 43448).